Consider the following 460-residue polypeptide: Ammonium transporter Rh type C (460 aa).

The Cytoplasmic segment spans residues 1–9; the sequence is MAWNTNLRW. Residues 10 to 30 traverse the membrane as a helical segment; the sequence is RLPLTCLLLQVIMVILFGVFV. The Extracellular segment spans residues 31-61; it reads RYDPDADAHWIDERLGRNISSDMDNEFYYRY. N48 carries an N-linked (GlcNAc...) asparagine glycan. The chain crosses the membrane as a helical span at residues 62 to 82; that stretch reads PSFQDVHVMIFVGFGFLMTFL. The Cytoplasmic segment spans residues 83-86; that stretch reads QRYG. Residues 87–107 traverse the membrane as a helical segment; the sequence is FSSVGFNFLLAAFGIQWALLM. At 108–125 the chain is on the extracellular side; sequence QGWLHSFHSGYIVLGVEN. Residues 126–145 form a helical membrane-spanning segment; that stretch reads LINADFCVGSVCVAFGAVLG. Over 146–151 the chain is Cytoplasmic; sequence KVSPVQ. The helical transmembrane segment at 152–174 threads the bilayer; the sequence is LLIMTLFQVTLFSVNEFILLNLL. Over 175–179 the chain is Extracellular; that stretch reads EVKDA. A helical transmembrane segment spans residues 180-200; sequence GGSMTIHTFGAYFGLTVTWIL. The Cytoplasmic segment spans residues 201-219; sequence YRPNLYQSKERQSSVYHSD. The chain crosses the membrane as a helical span at residues 220–240; it reads LFAMIGTLFLWMYWPSFNSAV. Residues 241–251 are Extracellular-facing; it reads SHHGDAQHRAA. The chain crosses the membrane as a helical span at residues 252-272; the sequence is INTYCSLAACVLTSVALSSAL. Topologically, residues 273–285 are cytoplasmic; it reads HKKGKLDMVHIQN. The chain crosses the membrane as a helical span at residues 286–306; the sequence is ATLAGGVAVGTAAEMMLMPYG. Position 307 (S307) is a topological domain, extracellular. Residues 308-328 form a helical membrane-spanning segment; that stretch reads LIVGFICGIISTLGFVYLTPF. Topologically, residues 329-340 are cytoplasmic; that stretch reads LESRLRIQDTCG. Residues 341-361 form a helical membrane-spanning segment; that stretch reads IHNLHGMPGIIGGIVGAVTAA. Residues 362–396 lie on the Extracellular side of the membrane; that stretch reads SANTQQYGQKGLAHAFDIDATKTTWTASMQGSFQA. A helical transmembrane segment spans residues 397–417; the sequence is AGLFVSLAMALVGGLIVGVIL. The Cytoplasmic segment spans residues 418–460; sequence KLPFWGQPADENCFEDAIYWEIPEDQKSLVSRSEDPTLRPTEP.

This sequence belongs to the ammonium transporter (TC 2.A.49) family. Rh subfamily. In terms of assembly, homotrimer. In terms of processing, N-glycosylated.

Its subcellular location is the cell membrane. It localises to the apical cell membrane. It carries out the reaction NH4(+)(in) = NH4(+)(out). The catalysed reaction is methylamine(out) = methylamine(in). The enzyme catalyses CO2(out) = CO2(in). Functionally, ammonium transporter involved in the maintenance of acid-base homeostasis. Transports ammonium and its related derivative methylammonium across the plasma membrane of epithelial cells likely contributing to renal transepithelial ammonia transport and ammonia metabolism. Postulated to primarily mediate an electroneutral bidirectional transport of NH3 ammonia species according to a mechanism that implies interaction of an NH4(+) ion with acidic residues of the pore entry followed by dissociation of NH4(+) into NH3 and H(+). As a result NH3 transits through the central pore and is protonated on the extracellular side reforming NH4(+). May act as a CO2 channel providing for renal acid secretion. The polypeptide is Ammonium transporter Rh type C (RHCG) (Sus scrofa (Pig)).